We begin with the raw amino-acid sequence, 736 residues long: Oxysterol-binding protein-related protein 9 (736 aa).

Position 2 is an N-acetylalanine (Ala-2). One can recognise a PH domain in the interval 2-99 (ASIMEGPLSK…WIHALEETIL (98 aa)). The tract at residues 231-367 (KSEQRPSSLP…DRDDDAEAGS (137 aa)) is disordered. Residues 253-290 (TPTPNSTGSGHSPPSSSLTSPSHVNLSPNTVPEFSYSS) show a composition bias toward low complexity. Ser-306, Ser-324, Ser-325, Ser-326, and Ser-329 each carry phosphoserine. 2 stretches are compositionally biased toward polar residues: residues 314-329 (SSGS…SGNS) and 336-347 (TESLNSSLSNGT). Ser-611 carries the post-translational modification Phosphoserine.

Belongs to the OSBP family. As to quaternary structure, heterodimer with OSBPL11. Interacts with OSBPL10. In terms of tissue distribution, widely expressed.

It localises to the late endosome membrane. It is found in the golgi apparatus. The protein resides in the trans-Golgi network membrane. It catalyses the reaction a 1,2-diacyl-sn-glycero-3-phospho-(1D-myo-inositol 4-phosphate)(out) + a 1,2-diacyl-sn-glycero-3-phospho-L-serine(in) = a 1,2-diacyl-sn-glycero-3-phospho-(1D-myo-inositol 4-phosphate)(in) + a 1,2-diacyl-sn-glycero-3-phospho-L-serine(out). Functionally, interacts with OSBPL11 to function as lipid transfer proteins. Together they form a heterodimer that localizes at the ER-trans-Golgi membrane contact sites, and exchanges phosphatidylserine (1,2-diacyl-sn-glycero-3-phospho-L-serine, PS) for phosphatidylinositol-4-phosphate (1,2-diacyl-sn-glycero-3-phospho-(1D-myo-inositol 4-phosphate), PI(4)P) between the two organelles, a step that is critical for sphingomyelin synthesis in the Golgi complex. This chain is Oxysterol-binding protein-related protein 9 (OSBPL9), found in Homo sapiens (Human).